We begin with the raw amino-acid sequence, 197 residues long: Holliday junction branch migration complex subunit RuvA (197 aa).

The tract at residues 1–63 (MYAYLKGIIT…EDAHLLYGFR (63 aa)) is domain I. The tract at residues 64 to 142 (SEDEKKLFLS…VAGDDLPAKI (79 aa)) is domain II. Residues 143–147 (AVQAS) form a flexible linker region. A domain III region spans residues 148–197 (AENQELEEAMEAMLALGYKATELKKIKKFFEGTTDTAENYIKSALKMLVK).

This sequence belongs to the RuvA family. In terms of assembly, homotetramer. Forms an RuvA(8)-RuvB(12)-Holliday junction (HJ) complex. HJ DNA is sandwiched between 2 RuvA tetramers; dsDNA enters through RuvA and exits via RuvB. An RuvB hexamer assembles on each DNA strand where it exits the tetramer. Each RuvB hexamer is contacted by two RuvA subunits (via domain III) on 2 adjacent RuvB subunits; this complex drives branch migration. In the full resolvosome a probable DNA-RuvA(4)-RuvB(12)-RuvC(2) complex forms which resolves the HJ.

It localises to the cytoplasm. Its function is as follows. The RuvA-RuvB-RuvC complex processes Holliday junction (HJ) DNA during genetic recombination and DNA repair, while the RuvA-RuvB complex plays an important role in the rescue of blocked DNA replication forks via replication fork reversal (RFR). RuvA specifically binds to HJ cruciform DNA, conferring on it an open structure. The RuvB hexamer acts as an ATP-dependent pump, pulling dsDNA into and through the RuvAB complex. HJ branch migration allows RuvC to scan DNA until it finds its consensus sequence, where it cleaves and resolves the cruciform DNA. The sequence is that of Holliday junction branch migration complex subunit RuvA from Streptococcus pneumoniae (strain Taiwan19F-14).